The following is a 252-amino-acid chain: 2-succinyl-6-hydroxy-2,4-cyclohexadiene-1-carboxylate synthase (252 aa).

This sequence belongs to the AB hydrolase superfamily. MenH family. As to quaternary structure, monomer.

The catalysed reaction is 5-enolpyruvoyl-6-hydroxy-2-succinyl-cyclohex-3-ene-1-carboxylate = (1R,6R)-6-hydroxy-2-succinyl-cyclohexa-2,4-diene-1-carboxylate + pyruvate. It functions in the pathway quinol/quinone metabolism; 1,4-dihydroxy-2-naphthoate biosynthesis; 1,4-dihydroxy-2-naphthoate from chorismate: step 3/7. Its pathway is quinol/quinone metabolism; menaquinone biosynthesis. Functionally, catalyzes a proton abstraction reaction that results in 2,5-elimination of pyruvate from 2-succinyl-5-enolpyruvyl-6-hydroxy-3-cyclohexene-1-carboxylate (SEPHCHC) and the formation of 2-succinyl-6-hydroxy-2,4-cyclohexadiene-1-carboxylate (SHCHC). This is 2-succinyl-6-hydroxy-2,4-cyclohexadiene-1-carboxylate synthase from Escherichia coli O7:K1 (strain IAI39 / ExPEC).